The chain runs to 217 residues: 3,4-dihydroxy-2-butanone 4-phosphate synthase (217 aa).

Residues 37–38, Asp42, 150–154, and Glu174 contribute to the D-ribulose 5-phosphate site; these read RE and RRGHT. A Mg(2+)-binding site is contributed by Glu38. A Mg(2+)-binding site is contributed by His153.

This sequence belongs to the DHBP synthase family. Homodimer. Requires Mg(2+) as cofactor. Mn(2+) is required as a cofactor.

It carries out the reaction D-ribulose 5-phosphate = (2S)-2-hydroxy-3-oxobutyl phosphate + formate + H(+). The protein operates within cofactor biosynthesis; riboflavin biosynthesis; 2-hydroxy-3-oxobutyl phosphate from D-ribulose 5-phosphate: step 1/1. Its function is as follows. Catalyzes the conversion of D-ribulose 5-phosphate to formate and 3,4-dihydroxy-2-butanone 4-phosphate. The polypeptide is 3,4-dihydroxy-2-butanone 4-phosphate synthase (Shewanella sediminis (strain HAW-EB3)).